An 899-amino-acid polypeptide reads, in one-letter code: Gamma-aminobutyric acid type B receptor subunit 1 (899 aa).

The signal sequence occupies residues 1–19 (MFVRSSWLLLWGTIVWASA). The Extracellular segment spans residues 20–447 (EPVTLHIGGT…KKHAMTVSNE (428 aa)). N-linked (GlcNAc...) asparagine glycosylation is found at Asn69, Asn266, Asn339, Asn353, and Asn371. Residues 448-468 (FYYPTILFAVLGIAACVFIYL) form a helical membrane-spanning segment. At 469 to 487 (FTQKHHERLIIFQSQPECN) the chain is on the cytoplasmic side. A helical transmembrane segment spans residues 488-508 (NILLIGCSLCLFSLFLIGLPS). The Extracellular portion of the chain corresponds to 509–525 (DDISISESLFPLLCHAR). A helical membrane pass occupies residues 526–546 (VTILLFGFTFAYGSMFAKVWI). Residues 547-616 (VHRMGATENQ…LNQPISSSKF (70 aa)) are Cytoplasmic-facing. Residues 617 to 637 (YVIVAALTAVDVFVCFVWVLI) form a helical membrane-spanning segment. At 638-674 (DPLHLTEQKFPLFTPADSEEDEMIMPVLQQCQSNQQE) the chain is on the extracellular side. A helical membrane pass occupies residues 675-695 (VWIGIIMGFKCLLLVFGTFLS). Residues 696-713 (YETRNLKLRFINDSRFVG) lie on the Cytoplasmic side of the membrane. The helical transmembrane segment at 714-734 (LAIYNVAVMTLVTAPVVTLLI) threads the bilayer. Topologically, residues 735–741 (HGKVDAN) are extracellular. Residues 742–762 (FAFISLTVLICTYISVGLIYG) traverse the membrane as a helical segment. The Cytoplasmic portion of the chain corresponds to 763 to 899 (PKIRHIIKVP…SSTSSDEILL (137 aa)). Residues 791-842 (KVDQKRYDMLKKENETLQIQIEEKERKIHECKERLEELTKNSETEDMNAQLL) adopt a coiled-coil conformation. The segment at 870–899 (DLQNGNHPGQIYENDNDDDGSSTSSDEILL) is disordered. The segment covering 890–899 (SSTSSDEILL) has biased composition (low complexity).

Belongs to the G-protein coupled receptor 3 family. May form a heterodimer with gbb-2. Expressed in the nervous system, including cholinergic motor neurons, but not in GABAergic motor neurons or muscle.

The protein localises to the cell membrane. Functionally, component of a heterodimeric G-protein coupled receptor for GABA, formed by gbb-1 and gbb-2. Within the heterodimeric GABA receptor, only gbb-1 seems to bind agonists, while gbb-2 mediates coupling to G proteins. Ligand binding causes a conformation change that triggers signaling via guanine nucleotide-binding proteins (G proteins) and modulates the activity of down-stream effectors, such as adenylate cyclase. Signaling inhibits adenylate cyclase, stimulates phospholipase A2, activates potassium channels, inactivates voltage-dependent calcium-channels and modulates inositol phospholipid hydrolysis. Calcium is required for high affinity binding to GABA. Plays a critical role in the fine-tuning of inhibitory synaptic transmission. Pre-synaptic GABA receptor inhibits neurotransmitter release by down-regulating high-voltage activated calcium channels, whereas postsynaptic GABA receptor decreases neuronal excitability by activating a prominent inwardly rectifying potassium (Kir) conductance that underlies the late inhibitory postsynaptic potentials. Along with gbb-2, may couple to the G(o)-alpha G-protein goa-1 to negatively regulate cholinergic receptor activity in the presence of high levels of acetylcholine in ventral cord motor neurons. As acetylcholine depolarizes body wall muscles, modulation of acetylcholine levels most likely results in the control of locomotory behavior. Acts in neurons to regulate lifespan, and this may be through G-protein-egl-8/PLC-beta signaling to the transcription factor daf-16/FOXO. This is Gamma-aminobutyric acid type B receptor subunit 1 from Caenorhabditis elegans.